A 305-amino-acid polypeptide reads, in one-letter code: Serine/threonine-protein phosphatase 6 catalytic subunit (305 aa).

An N-acetylmethionine modification is found at Met1. Mn(2+) contacts are provided by Asp53, His55, Asp81, and Asn113. The active-site Proton donor is His114. Positions 163 and 237 each coordinate Mn(2+).

It belongs to the PPP phosphatase family. PP-6 (PP-V) subfamily. As to quaternary structure, protein phosphatase 6 (PP6) holoenzyme is proposed to be a heterotrimeric complex formed by the catalytic subunit, a SAPS domain-containing subunit (PP6R) and an ankyrin repeat-domain containing regulatory subunit (ARS). Interacts with subunits PPP6R1, PPP6R2 and PPP6R3. Interacts with subunit ANKRD28. Interacts with IGBP1. Interacts with MAP3K7. Interacts with NFKBIE. Interacts with TRIM14 and WRNIP1; these interactions positively regulate the RIG-I signaling pathway. Mn(2+) serves as cofactor. In terms of tissue distribution, ubiquitously expressed in all tissues tested with strongest expression in lung, spleen, liver, kidney and brain. Weaker expression observed in bladder, pancreas, heart and skeletal muscle.

The protein resides in the mitochondrion. Its subcellular location is the cytoplasm. The enzyme catalyses O-phospho-L-seryl-[protein] + H2O = L-seryl-[protein] + phosphate. It catalyses the reaction O-phospho-L-threonyl-[protein] + H2O = L-threonyl-[protein] + phosphate. In terms of biological role, catalytic subunit of protein phosphatase 6 (PP6). PP6 is a component of a signaling pathway regulating cell cycle progression in response to IL2 receptor stimulation. N-terminal domain restricts G1 to S phase progression in cancer cells, in part through control of cyclin D13 During mitosis, regulates spindle positioning. Down-regulates MAP3K7 kinase activation of the IL1 signaling pathway by dephosphorylation of MAP3K7. Acts as a regulator of innate immunity by mediating dephosphorylation CGAS, STING1 and RIGI. Also participates in the innate immune defense against viruses by desphosphorylating RIGI, an essential step that triggers RIGI-mediated signaling activation. Also regulates innate immunity by acting as a negative regulator of the cGAS-STING pathway: mediates dephosphorylation and inactivation of CGAS and STING1. CGAS dephosphorylation at 'Ser-420' impairs its ability to bind GTP, thereby inactivating it. In Mus musculus (Mouse), this protein is Serine/threonine-protein phosphatase 6 catalytic subunit.